The chain runs to 2179 residues: Genome polyprotein (2179 aa).

4 disordered regions span residues 503 to 531 (FSKD…PTGD), 623 to 678 (QPQK…YPIQ), 703 to 738 (RAKK…GDQF), and 753 to 847 (EPSV…PPKM). Polar residues-rich tracts occupy residues 630-642 (DTPS…QPFH) and 659-678 (TTFA…YPIQ). Positions 758–770 (SEDTSSQSYISTE) are enriched in polar residues. A compositionally biased stretch (low complexity) spans 783–806 (SEESTQLSQLSSSSNDSPENNENT). Positions 819 to 831 (EISEVEDEVDGMT) are enriched in acidic residues. The CCHC-type zinc-finger motif lies at 1112–1125 (CFTCGKIGHFSRNC). The active-site For protease activity; shared with dimeric partner is the aspartate 1226. The 183-residue stretch at 1409 to 1591 (QQFDLIEPSD…NKIQFLGMDF (183 aa)) folds into the Reverse transcriptase domain. Mg(2+) is bound by residues aspartate 1479, aspartate 1542, and aspartate 1543. 3 disordered regions span residues 1822–1848 (QRRT…KLSH), 2114–2144 (NIVK…KNKC), and 2160–2179 (YSTK…EPCV). Residues 1827 to 1840 (SSSTKSKADSSQST) show a composition bias toward low complexity. The span at 2120–2144 (PRKRKGKAKSRSSTRSEKRRAKNKC) shows a compositional bias: basic residues. A compositionally biased stretch (polar residues) spans 2162–2179 (TKPSTPSWTQDSSSEPCV).

The protein belongs to the Petuviruses genome polyprotein family.

It carries out the reaction DNA(n) + a 2'-deoxyribonucleoside 5'-triphosphate = DNA(n+1) + diphosphate. In terms of biological role, encodes presumably for at least four polypeptides: Movement protein (MP), capsid protein (CP), Protease (PR), and reverse transcriptase (RT). The chain is Genome polyprotein from Petunia vein clearing virus (isolate Shepherd) (PVCV).